A 354-amino-acid polypeptide reads, in one-letter code: MGSGASAEDKELAKRSKELEKKLQEDADKEAKTVKLLLLGAGESGKSTIVKQMKIIHQDGYSPEECLEFKAIIYGNVLQSILAIIRAMTTLGIDYAEPSCADDGRQLNNLADSIEEGTMPPELVEVIRRLWKDGGVQACFERAAEYQLNDSASYYLNQLERITDPEYLPSEQDVLRSRVKTTGIIETKFSVKDLNFRMFDVGGQRSERKKWIHCFEGVTCIIFCAALSAYDMVLVEDDEVNRMHESLHLFNSICNHKFFAATSIVLFLNKKDLFEEKIKKVHLSICFPEYDGNNSYDDAGNYIKSQFLDLNMRKDVKEIYSHMTCATDTQNVKFVFDAVTDIIIKENLKDCGLF.

The interval 1-27 (MGSGASAEDKELAKRSKELEKKLQEDA) is disordered. G2 is lipidated: N-myristoyl glycine. Residues 7 to 27 (AEDKELAKRSKELEKKLQEDA) show a composition bias toward basic and acidic residues. A G-alpha domain is found at 32–354 (KTVKLLLLGA…KENLKDCGLF (323 aa)). Residues 35-48 (KLLLLGAGESGKST) form a G1 motif region. Residues 40–47 (GAGESGKS), 175–181 (LRSRVKT), 200–204 (DVGGQ), 269–272 (NKKD), and A326 contribute to the GTP site. S47 contacts Mg(2+). Residues 173-181 (DVLRSRVKT) are G2 motif. R178 carries the ADP-ribosylarginine; by cholera toxin modification. T181 is a binding site for Mg(2+). The interval 196 to 205 (FRMFDVGGQR) is G3 motif. The segment at 265-272 (VLFLNKKD) is G4 motif. Residues 324–329 (TCATDT) are G5 motif. C351 carries the ADP-ribosylcysteine; by pertussis toxin modification.

Belongs to the G-alpha family. G(i/o/t/z) subfamily. G proteins are composed of 3 units; alpha, beta and gamma. The alpha chain contains the guanine nucleotide binding site. In terms of tissue distribution, retinal rod outer segment.

The protein resides in the cell projection. Its subcellular location is the cilium. The protein localises to the photoreceptor outer segment. It localises to the photoreceptor inner segment. Functionally, guanine nucleotide-binding proteins (G proteins) are involved as modulators or transducers in various transmembrane signaling systems. Transducin is an amplifier and one of the transducers of a visual impulse that performs the coupling between rhodopsin and cGMP-phosphodiesterase. The chain is Guanine nucleotide-binding protein G(t) subunit alpha-2 (GNAT2) from Homo sapiens (Human).